We begin with the raw amino-acid sequence, 381 residues long: Acetylornithine deacetylase (381 aa).

Zn(2+) is bound at residue H79. D81 is an active-site residue. D111 contacts Zn(2+). E143 is a catalytic residue. The Zn(2+) site is built by E144, E168, and H354.

It belongs to the peptidase M20A family. ArgE subfamily. As to quaternary structure, homodimer. Zn(2+) serves as cofactor. Requires Co(2+) as cofactor. It depends on glutathione as a cofactor.

The protein resides in the cytoplasm. It catalyses the reaction N(2)-acetyl-L-ornithine + H2O = L-ornithine + acetate. It participates in amino-acid biosynthesis; L-arginine biosynthesis; L-ornithine from N(2)-acetyl-L-ornithine (linear): step 1/1. Catalyzes the hydrolysis of the amide bond of N(2)-acetylated L-amino acids. Cleaves the acetyl group from N-acetyl-L-ornithine to form L-ornithine, an intermediate in L-arginine biosynthesis pathway, and a branchpoint in the synthesis of polyamines. In Buchnera aphidicola subsp. Schizaphis graminum (strain Sg), this protein is Acetylornithine deacetylase.